The chain runs to 175 residues: MLPHLVLNSISWMLLSCLLFVFQVQGEDFQKEVPSPRTSCPMGYKAYRSHCYALVMTPKSWFQADLVCQKRPSGHLVSILSGGEASFVSSLVNGRVDNYQDIWIGLHDPTMGQQPNGGGWEWSNSDVLNYLNWDGDPSSTVNRGHCGSLTASSGFLKWGDYYCDGTLPFVCKFKQ.

The signal sequence occupies residues Met1–Gly26. Positions Glu27–Arg37 are excised as a propeptide. Intrachain disulfides connect Cys40–Cys51, Cys68–Cys171, and Cys146–Cys163. Residues Tyr47 to Lys172 form the C-type lectin domain. Positions 50, 107, 121, and 145 each coordinate Zn(2+). The sufficient to activate EXTL3 stretch occupies residues Trp103–Gly118.

Forms a hexameric membrane-permeabilizing oligomeric pore on membrane phospholipids. The hexamer is formed by three dimers related by helical symmetry. Forms filaments, filamentation traps pore complexes and limits damage to host cells. Interacts with EXTL3. Proteolytic processing by trypsin removes an inhibitory N-terminal propeptide and is essential for peptidoglycan binding and antibacterial activity. Small intestine and pancreas.

The protein resides in the secreted. Bactericidal C-type lectin. The lack of the EPN motif may explain its inability to bind peptidoglycan. In terms of biological role, acts as a hormone in response to different stimuli like anti-inflammatory signals, such as IL17A, or gut microbiome. Secreted by different cell types to activate its receptor EXTL3 and induce cell specific signaling pathways. Induced by IL17A in keratinocytes, regulates keratinocyte proliferation and differentiation after skin injury via activation of EXTL3-PI3K-AKT signaling pathway. In parallel, inhibits skin inflammation through the inhibition of inflammatory cytokines such as IL6 and TNF. In pancreas, is able to permealize beta-cells membrane and stimulate their proliferation. This Mus musculus (Mouse) protein is Regenerating islet-derived protein 3-alpha (Reg3a).